A 458-amino-acid chain; its full sequence is Phenylalanine-specific permease (458 aa).

At Met-1–His-27 the chain is on the cytoplasmic side. The chain crosses the membrane as a helical span at residues Ile-28–Ala-48. The Periplasmic segment spans residues Ile-49 to Gln-50. A helical membrane pass occupies residues Met-51–Met-71. Residues Arg-72 to Trp-105 are Cytoplasmic-facing. Residues Asn-106–Met-126 traverse the membrane as a helical segment. Over Gln-127–Asp-132 the chain is Periplasmic. A helical transmembrane segment spans residues Val-133–Asn-153. At Val-154 to Thr-160 the chain is on the cytoplasmic side. Residues Glu-161–Trp-181 traverse the membrane as a helical segment. Over Leu-182 to Asn-196 the chain is Periplasmic. A helical membrane pass occupies residues Leu-197–Val-217. Topologically, residues Ile-218 to Val-250 are cytoplasmic. The chain crosses the membrane as a helical span at residues Tyr-251–Val-271. Residues Glu-272 to Asp-288 lie on the Periplasmic side of the membrane. A helical transmembrane segment spans residues Ser-289–Asn-309. Topologically, residues Ser-310 to Pro-341 are cytoplasmic. The helical transmembrane segment at Ile-342–Leu-362 threads the bilayer. Over Pro-363–Phe-367 the chain is Periplasmic. The chain crosses the membrane as a helical span at residues Gly-368–Ala-388. Topologically, residues His-389–Pro-411 are cytoplasmic. Residues Phe-412–Asp-432 form a helical membrane-spanning segment. Topologically, residues Asp-433–Met-434 are periplasmic. A helical transmembrane segment spans residues Arg-435–Leu-455. At Arg-456–Lys-458 the chain is on the cytoplasmic side.

It belongs to the amino acid-polyamine-organocation (APC) superfamily. Amino acid transporter (AAT) (TC 2.A.3.1) family.

The protein localises to the cell inner membrane. It carries out the reaction L-phenylalanine(in) + H(+)(in) = L-phenylalanine(out) + H(+)(out). Permease that is involved in the active transport across the cytoplasmic membrane of phenylalanine. Can also transport tyrosine, but not tryptophan. This chain is Phenylalanine-specific permease, found in Escherichia coli (strain K12).